We begin with the raw amino-acid sequence, 129 residues long: UPF0148 protein AF_2370 (129 aa).

The interval 61-80 (SAAKAESEEKPPESTKPAVK) is disordered.

This sequence belongs to the UPF0148 family.

The protein is UPF0148 protein AF_2370 of Archaeoglobus fulgidus (strain ATCC 49558 / DSM 4304 / JCM 9628 / NBRC 100126 / VC-16).